A 189-amino-acid chain; its full sequence is Potassium-transporting ATPase KdpC subunit (189 aa).

A helical transmembrane segment spans residues 6–26 (PAILFFIVFTILCGGVYPAVV).

It belongs to the KdpC family. The system is composed of three essential subunits: KdpA, KdpB and KdpC.

The protein resides in the cell inner membrane. Part of the high-affinity ATP-driven potassium transport (or Kdp) system, which catalyzes the hydrolysis of ATP coupled with the electrogenic transport of potassium into the cytoplasm. This subunit acts as a catalytic chaperone that increases the ATP-binding affinity of the ATP-hydrolyzing subunit KdpB by the formation of a transient KdpB/KdpC/ATP ternary complex. The polypeptide is Potassium-transporting ATPase KdpC subunit (Geotalea uraniireducens (strain Rf4) (Geobacter uraniireducens)).